A 426-amino-acid polypeptide reads, in one-letter code: 3-phosphoshikimate 1-carboxyvinyltransferase (426 aa).

3 residues coordinate 3-phosphoshikimate: K22, S23, and R27. A phosphoenolpyruvate-binding site is contributed by K22. G96 and R124 together coordinate phosphoenolpyruvate. 3-phosphoshikimate contacts are provided by S170, S171, Q172, S198, D314, N337, and K341. Q172 contacts phosphoenolpyruvate. The active-site Proton acceptor is D314. 3 residues coordinate phosphoenolpyruvate: R345, R387, and K412.

Belongs to the EPSP synthase family. In terms of assembly, monomer.

The protein resides in the cytoplasm. It carries out the reaction 3-phosphoshikimate + phosphoenolpyruvate = 5-O-(1-carboxyvinyl)-3-phosphoshikimate + phosphate. Its pathway is metabolic intermediate biosynthesis; chorismate biosynthesis; chorismate from D-erythrose 4-phosphate and phosphoenolpyruvate: step 6/7. Its function is as follows. Catalyzes the transfer of the enolpyruvyl moiety of phosphoenolpyruvate (PEP) to the 5-hydroxyl of shikimate-3-phosphate (S3P) to produce enolpyruvyl shikimate-3-phosphate and inorganic phosphate. This Shewanella woodyi (strain ATCC 51908 / MS32) protein is 3-phosphoshikimate 1-carboxyvinyltransferase.